We begin with the raw amino-acid sequence, 160 residues long: ATP synthase subunit delta, mitochondrial (160 aa).

Residues Met-1–Tyr-22 constitute a mitochondrion transit peptide.

F-type ATP synthases have 2 components, the catalytic core F(1) and the membrane-embedded component F(0), linked together by a central stalk and a peripheral stalk. The central stalk, also called rotor shaft, is often seen as part of F(1). The peripheral stalk is seen as part of F(0). F(0) contains the membrane channel next to the rotor. F-type ATP synthases form dimers but each monomer functions independently in ATP generation. The dimer consists of 18 different polypeptides: ATP1 (subunit alpha, part of F(1), 3 molecules per monomer), ATP2 (subunit beta, part of F(1), 3 molecules per monomer), ATP3 (subunit gamma, part of the central stalk), ATP4 (subunit b, part of the peripheral stalk), ATP5/OSCP (subunit 5/OSCP, part of the peripheral stalk), ATP6 (subunit a, part of the peripheral stalk), ATP7 (subunit d, part of the peripheral stalk), ATP8 (subunit 8, part of the peripheral stalk), OLI1 (subunit c, part of the rotor, 10 molecules per monomer), ATP14 (subunit h, part of the peripheral stalk), ATP15 (subunit epsilon, part of the central stalk), ATP16 (subunit delta, part of the central stalk), ATP17 (subunit f, part of the peripheral stalk), ATP18 (subunit i/j, part of the peripheral stalk). Dimer-specific subunits are ATP19 (subunit k, at interface between monomers), ATP20 (subunit g, at interface between monomers), TIM11 (subunit e, at interface between monomers). Also contains subunit L.

It localises to the mitochondrion inner membrane. Its function is as follows. Mitochondrial membrane ATP synthase (F(1)F(0) ATP synthase or Complex V) produces ATP from ADP in the presence of a proton gradient across the membrane which is generated by electron transport complexes of the respiratory chain. F-type ATP synthases consist of two structural domains, F(1) - containing the extramembraneous catalytic core, and F(0) - containing the membrane proton channel, linked together by a central stalk and a peripheral stalk. During catalysis, ATP synthesis in the catalytic domain of F(1) is coupled via a rotary mechanism of the central stalk subunits to proton translocation. Part of the complex F(1) domain and the central stalk which is part of the complex rotary element. Rotation of the central stalk against the surrounding alpha/ATP1(3)beta/ATP2(3) subunits leads to hydrolysis of ATP in three separate catalytic sites on the beta/ATP2 subunits. The polypeptide is ATP synthase subunit delta, mitochondrial (Pichia angusta (Yeast)).